Reading from the N-terminus, the 238-residue chain is tRNA (guanine-N(7)-)-methyltransferase (238 aa).

Residues Glu-70, Asp-95, Asp-122, and Asp-145 each coordinate S-adenosyl-L-methionine. Asp-145 is a catalytic residue. Substrate contacts are provided by residues Lys-149, Asp-181, and 216–219; that span reads TKFE.

Belongs to the class I-like SAM-binding methyltransferase superfamily. TrmB family.

The enzyme catalyses guanosine(46) in tRNA + S-adenosyl-L-methionine = N(7)-methylguanosine(46) in tRNA + S-adenosyl-L-homocysteine. Its pathway is tRNA modification; N(7)-methylguanine-tRNA biosynthesis. In terms of biological role, catalyzes the formation of N(7)-methylguanine at position 46 (m7G46) in tRNA. This is tRNA (guanine-N(7)-)-methyltransferase from Neisseria gonorrhoeae (strain ATCC 700825 / FA 1090).